The primary structure comprises 280 residues: DCN1-like protein 4 (280 aa).

Positions 37–71 are disordered; the sequence is GPESHGTACCSRAMPPRKKRRPTAGDDLSAKKSRQ. Residues 89-275 enclose the DCUN1 domain; it reads FSSKRCLEWF…LLDEFVEWYK (187 aa).

May interact (via the DCUN1 domain) with unneddylated cullins.

The protein resides in the nucleus. Functionally, contributes to the neddylation of all cullins by transferring NEDD8 from N-terminally acetylated NEDD8-conjugating E2s enzyme to different cullin C-terminal domain-RBX complexes. The polypeptide is DCN1-like protein 4 (Danio rerio (Zebrafish)).